The chain runs to 117 residues: Zinc metalloproteinase/disintegrin (117 aa).

The 82-residue stretch at 36 to 117 folds into the Disintegrin domain; that stretch reads TPVSGNELLE…AGCPRNPFHA (82 aa). Intrachain disulfides connect Cys50-Cys65, Cys52-Cys60, Cys59-Cys82, Cys73-Cys79, Cys78-Cys103, and Cys91-Cys110. The Cell attachment site signature appears at 95-97; it reads RGD.

Belongs to the venom metalloproteinase (M12B) family. P-II subfamily. P-IIa sub-subfamily. In terms of assembly, monomer. Zn(2+) is required as a cofactor. As to expression, expressed by the venom gland.

It is found in the secreted. Its function is as follows. Impairs hemostasis in the envenomed animal. Inhibits platelet aggregation and bone resorption. This Gloydius halys (Chinese water mocassin) protein is Zinc metalloproteinase/disintegrin.